The following is a 270-amino-acid chain: tRNA pseudouridine synthase A (270 aa).

Asp-51 (nucleophile) is an active-site residue. Substrate is bound at residue Tyr-109.

Belongs to the tRNA pseudouridine synthase TruA family. As to quaternary structure, homodimer.

The enzyme catalyses uridine(38/39/40) in tRNA = pseudouridine(38/39/40) in tRNA. In terms of biological role, formation of pseudouridine at positions 38, 39 and 40 in the anticodon stem and loop of transfer RNAs. The protein is tRNA pseudouridine synthase A of Burkholderia lata (strain ATCC 17760 / DSM 23089 / LMG 22485 / NCIMB 9086 / R18194 / 383).